The chain runs to 102 residues: Small ribosomal subunit protein uS10 (102 aa).

It belongs to the universal ribosomal protein uS10 family. In terms of assembly, part of the 30S ribosomal subunit.

Its function is as follows. Involved in the binding of tRNA to the ribosomes. The protein is Small ribosomal subunit protein uS10 of Brevibacillus brevis (strain 47 / JCM 6285 / NBRC 100599).